The following is a 915-amino-acid chain: p53-induced death domain-containing protein 1 (915 aa).

The residue at position 2 (A2) is an N-acetylalanine. LRR repeat units follow at residues 131–152 (CLAH…VPEL), 154–176 (GLDA…GALP), 177–199 (ALTF…GSLS), 200–221 (TLQR…IGNL), 223–245 (SLSE…AGLR), 246–268 (SLRL…VHLP), and 269–290 (LITR…LLDA). S304 carries the post-translational modification Phosphoserine. ZU5 domains are found at residues 327–459 (DLDS…VLRP) and 460–601 (VSNT…WYTT). Peptidase S68 regions lie at residues 428–457 (DLET…LVVL) and 571–599 (DITT…WLWY). Catalysis depends on residues H449, S451, H591, and S593. Residues 585–721 (ARFQVTHFSW…TTALDREAQD (137 aa)) are UPA domain. One can recognise a Death domain in the interval 793–878 (TQSNLLSVAS…DVAEEVRAIL (86 aa)). Residues 888–915 (SIRRTGLAPEDSTLPGTSASQTPESAQA) are disordered. Polar residues predominate over residues 901–915 (LPGTSASQTPESAQA).

In terms of assembly, forms a complex named the PIDDosome with CASP2 and CRADD. Forms a complex with IKBKG and RIPK1. Interacts with FADD and MADD. Post-translationally, undergoes autoproteolytic processing whose extent either directs cells towards survival or apoptotic pathways. Autoproteolytically cleaved into two main fragments PIDD-N and PIDD-C. PIDD-C can be further processed into PIDD-CC, a processing which is enhanced by DNA damage. The cleavage producing PIDD-C is required for translocation of PIDD1 to the nucleus upon DNA damage and activation of NF-kappa-B. PIDD-CC mediates the interaction with CRADD and the cleavage producing PIDD-CC is required for the activation of CASP2. PIDD-N remains associated with PIDD-C and PIDD-CC after cleavage. In terms of tissue distribution, ubiquitous.

The protein localises to the cytoplasm. Its subcellular location is the nucleus. Functionally, component of the DNA damage/stress response pathway that functions downstream of p53/TP53 and can either promote cell survival or apoptosis. Associated with CRADD and the CASP2 caspase, it forms the PIDDosome a complex that activates CASP2 and triggers apoptosis. Associated with IKBKG and RIPK1, it enhances sumoylation and ubiquitination of IKBKG which is important for activation of the transcription factor NF-kappa-B. This Mus musculus (Mouse) protein is p53-induced death domain-containing protein 1.